The sequence spans 447 residues: Probable cytosol aminopeptidase (447 aa).

The Mn(2+) site is built by Lys218 and Asp223. Residue Lys230 is part of the active site. Asp241, Asp300, and Glu302 together coordinate Mn(2+). Arg304 is an active-site residue.

This sequence belongs to the peptidase M17 family. Mn(2+) serves as cofactor.

Its subcellular location is the cytoplasm. The enzyme catalyses Release of an N-terminal amino acid, Xaa-|-Yaa-, in which Xaa is preferably Leu, but may be other amino acids including Pro although not Arg or Lys, and Yaa may be Pro. Amino acid amides and methyl esters are also readily hydrolyzed, but rates on arylamides are exceedingly low.. It carries out the reaction Release of an N-terminal amino acid, preferentially leucine, but not glutamic or aspartic acids.. Functionally, presumably involved in the processing and regular turnover of intracellular proteins. Catalyzes the removal of unsubstituted N-terminal amino acids from various peptides. This Mycoplasma genitalium (strain ATCC 33530 / DSM 19775 / NCTC 10195 / G37) (Mycoplasmoides genitalium) protein is Probable cytosol aminopeptidase (pepA).